Consider the following 130-residue polypeptide: HTH-type transcriptional regulator KmtR (130 aa).

Positions 10-104 constitute an HTH arsR-type domain; that stretch reads LPDDQVCLVV…DAVFNAEHAG (95 aa). Positions 44–67 form a DNA-binding region, H-T-H motif; the sequence is VNELAEQVGKPAPSVSQHLAKLRM. Positions 110-130 are disordered; that stretch reads HHRAAGGLQSVAKASATKDVG.

Its activity is regulated as follows. Binding to DNA is inhibited by nickel and cobalt ions. Functionally, represses expression of Rv2025c and its own expression. Acts by binding to the promoter regions. The chain is HTH-type transcriptional regulator KmtR (kmtR) from Mycobacterium tuberculosis (strain ATCC 25618 / H37Rv).